A 399-amino-acid polypeptide reads, in one-letter code: Acetate kinase (399 aa).

Position 10 (asparagine 10) interacts with Mg(2+). Residue lysine 17 coordinates ATP. Arginine 91 lines the substrate pocket. Aspartate 148 acts as the Proton donor/acceptor in catalysis. Residues 208–212 (HLGNG), 283–285 (DCR), and 331–335 (GIGEN) contribute to the ATP site. Glutamate 385 serves as a coordination point for Mg(2+).

It belongs to the acetokinase family. Homodimer. Requires Mg(2+) as cofactor. It depends on Mn(2+) as a cofactor.

The protein resides in the cytoplasm. It catalyses the reaction acetate + ATP = acetyl phosphate + ADP. Its pathway is metabolic intermediate biosynthesis; acetyl-CoA biosynthesis; acetyl-CoA from acetate: step 1/2. Functionally, catalyzes the formation of acetyl phosphate from acetate and ATP. Can also catalyze the reverse reaction. In Shewanella sp. (strain MR-4), this protein is Acetate kinase.